The chain runs to 200 residues: HVA22-like protein k (200 aa).

Residues 176–200 are disordered; the sequence is LGEIANGSPVSETNSDSESDSNHED.

The protein belongs to the DP1 family.

This chain is HVA22-like protein k (HVA22K), found in Arabidopsis thaliana (Mouse-ear cress).